Reading from the N-terminus, the 255-residue chain is S-adenosyl-L-methionine-dependent uroporphyrinogen III methyltransferase (255 aa).

S-adenosyl-L-homocysteine contacts are provided by residues P15, 91 to 93, 121 to 122, M175, and A232; these read GGD and TS.

The protein belongs to the precorrin methyltransferase family. In terms of assembly, homodimer.

It carries out the reaction uroporphyrinogen III + 2 S-adenosyl-L-methionine = precorrin-2 + 2 S-adenosyl-L-homocysteine + H(+). The protein operates within porphyrin-containing compound metabolism; siroheme biosynthesis; precorrin-2 from uroporphyrinogen III: step 1/1. Involved in the archaeal biosynthesis of heme. Catalyzes the methylation of carbons 2 and 7 of uroporphyrinogen-III (UROGEN) to yield precorrin-2. It does not catalyze the overmethylation of precorrin-2 to trimethylpyrrocorphin. The polypeptide is S-adenosyl-L-methionine-dependent uroporphyrinogen III methyltransferase (Methanosarcina barkeri (strain Fusaro / DSM 804)).